The primary structure comprises 70 residues: U2-agatoxin-Ao1b (70 aa).

An N-terminal signal peptide occupies residues 1–20; it reads MRAIISLILISAMVFSMIAA. The propeptide occupies 21–34; that stretch reads VPEEEGLQLSEDER. Cystine bridges form between cysteine 37–cysteine 53, cysteine 44–cysteine 58, and cysteine 52–cysteine 68. Residue leucine 69 is modified to Leucine amide.

The protein belongs to the neurotoxin 01 (U2-agtx) family. As to expression, expressed by the venom gland.

It is found in the secreted. Insect active toxin causing rapid but reversible paralysis in crickets. No activity shown in mammals. Does not show effect on mammalian voltage-gated calcium channels. The polypeptide is U2-agatoxin-Ao1b (Agelena orientalis (Funnel-web spider)).